Here is a 307-residue protein sequence, read N- to C-terminus: Small ribosomal subunit biogenesis GTPase RsgA (307 aa).

The segment at 1-21 (MPSEHPFSDGIPTPNPKETMN) is disordered. In terms of domain architecture, CP-type G spans 85-242 (RQDAWKTKLI…LIDSPGLQEF (158 aa)). GTP contacts are provided by residues 135-138 (NKAD) and 184-192 (GQSGMGKST). Zn(2+) is bound by residues Cys266, Cys271, His273, and Cys279.

This sequence belongs to the TRAFAC class YlqF/YawG GTPase family. RsgA subfamily. Monomer. Associates with 30S ribosomal subunit, binds 16S rRNA. The cofactor is Zn(2+).

The protein resides in the cytoplasm. One of several proteins that assist in the late maturation steps of the functional core of the 30S ribosomal subunit. Helps release RbfA from mature subunits. May play a role in the assembly of ribosomal proteins into the subunit. Circularly permuted GTPase that catalyzes slow GTP hydrolysis, GTPase activity is stimulated by the 30S ribosomal subunit. This is Small ribosomal subunit biogenesis GTPase RsgA from Neisseria meningitidis serogroup B (strain ATCC BAA-335 / MC58).